Consider the following 337-residue polypeptide: Holliday junction branch migration complex subunit RuvB (337 aa).

The large ATPase domain (RuvB-L) stretch occupies residues 4–184; that stretch reads ADRLIQPQVL…FGIPLRLEFY (181 aa). ATP-binding positions include arginine 24, glycine 65, lysine 68, threonine 69, threonine 70, 131-133, arginine 174, tyrosine 184, and arginine 221; that span reads EDY. Position 69 (threonine 69) interacts with Mg(2+). Residues 185 to 255 form a small ATPAse domain (RuvB-S) region; the sequence is NVKDLCTIVT…VAQQALDMLD (71 aa). The interval 258-337 is head domain (RuvB-H); sequence QEGFDYLDRK…FNIITPDVPK (80 aa). DNA is bound by residues arginine 294, arginine 313, and arginine 318.

It belongs to the RuvB family. As to quaternary structure, homohexamer. Forms an RuvA(8)-RuvB(12)-Holliday junction (HJ) complex. HJ DNA is sandwiched between 2 RuvA tetramers; dsDNA enters through RuvA and exits via RuvB. An RuvB hexamer assembles on each DNA strand where it exits the tetramer. Each RuvB hexamer is contacted by two RuvA subunits (via domain III) on 2 adjacent RuvB subunits; this complex drives branch migration. In the full resolvosome a probable DNA-RuvA(4)-RuvB(12)-RuvC(2) complex forms which resolves the HJ.

It localises to the cytoplasm. It carries out the reaction ATP + H2O = ADP + phosphate + H(+). Its function is as follows. The RuvA-RuvB-RuvC complex processes Holliday junction (HJ) DNA during genetic recombination and DNA repair, while the RuvA-RuvB complex plays an important role in the rescue of blocked DNA replication forks via replication fork reversal (RFR). RuvA specifically binds to HJ cruciform DNA, conferring on it an open structure. The RuvB hexamer acts as an ATP-dependent pump, pulling dsDNA into and through the RuvAB complex. RuvB forms 2 homohexamers on either side of HJ DNA bound by 1 or 2 RuvA tetramers; 4 subunits per hexamer contact DNA at a time. Coordinated motions by a converter formed by DNA-disengaged RuvB subunits stimulates ATP hydrolysis and nucleotide exchange. Immobilization of the converter enables RuvB to convert the ATP-contained energy into a lever motion, pulling 2 nucleotides of DNA out of the RuvA tetramer per ATP hydrolyzed, thus driving DNA branch migration. The RuvB motors rotate together with the DNA substrate, which together with the progressing nucleotide cycle form the mechanistic basis for DNA recombination by continuous HJ branch migration. Branch migration allows RuvC to scan DNA until it finds its consensus sequence, where it cleaves and resolves cruciform DNA. This Shewanella denitrificans (strain OS217 / ATCC BAA-1090 / DSM 15013) protein is Holliday junction branch migration complex subunit RuvB.